Reading from the N-terminus, the 355-residue chain is 3-dehydroquinate synthase (355 aa).

Residues 71 to 76 (EGEERK), 105 to 109 (GVVGD), 129 to 130 (TS), Lys142, and Lys151 each bind NAD(+). Residues Glu184, His246, and His263 each coordinate Zn(2+).

It belongs to the sugar phosphate cyclases superfamily. Dehydroquinate synthase family. The cofactor is Co(2+). It depends on Zn(2+) as a cofactor. NAD(+) serves as cofactor.

It localises to the cytoplasm. The enzyme catalyses 7-phospho-2-dehydro-3-deoxy-D-arabino-heptonate = 3-dehydroquinate + phosphate. It functions in the pathway metabolic intermediate biosynthesis; chorismate biosynthesis; chorismate from D-erythrose 4-phosphate and phosphoenolpyruvate: step 2/7. Its function is as follows. Catalyzes the conversion of 3-deoxy-D-arabino-heptulosonate 7-phosphate (DAHP) to dehydroquinate (DHQ). This chain is 3-dehydroquinate synthase, found in Streptococcus pneumoniae (strain 70585).